Reading from the N-terminus, the 848-residue chain is Oligopeptide transport ATP-binding protein OppF (848 aa).

Residues 13–785 (VKALSMMFKV…PVHPYTRSLI (773 aa)) form the ABC transporter domain. 47–54 (GESGSGKS) is a binding site for ATP.

Belongs to the ABC transporter superfamily. The complex is composed of two ATP-binding proteins (OppD and OppF), two transmembrane proteins (OppB and OppC) and a solute-binding protein (OppA).

The protein resides in the cell membrane. The catalysed reaction is a [peptide](out) + ATP + H2O = a [peptide](in) + ADP + phosphate + H(+). In terms of biological role, part of the ABC transporter complex OppABCDF involved in the uptake of oligopeptides. Probably responsible for energy coupling to the transport system. The polypeptide is Oligopeptide transport ATP-binding protein OppF (oppF) (Mycoplasma genitalium (strain ATCC 33530 / DSM 19775 / NCTC 10195 / G37) (Mycoplasmoides genitalium)).